The chain runs to 449 residues: Glucose-6-phosphate isomerase (449 aa).

Residue Glu290 is the Proton donor of the active site. Catalysis depends on residues His311 and Lys425.

Belongs to the GPI family.

The protein localises to the cytoplasm. It carries out the reaction alpha-D-glucose 6-phosphate = beta-D-fructose 6-phosphate. The protein operates within carbohydrate biosynthesis; gluconeogenesis. It functions in the pathway carbohydrate degradation; glycolysis; D-glyceraldehyde 3-phosphate and glycerone phosphate from D-glucose: step 2/4. Catalyzes the reversible isomerization of glucose-6-phosphate to fructose-6-phosphate. This Exiguobacterium sibiricum (strain DSM 17290 / CCUG 55495 / CIP 109462 / JCM 13490 / 255-15) protein is Glucose-6-phosphate isomerase.